A 518-amino-acid polypeptide reads, in one-letter code: Pre-glycoprotein polyprotein GP complex (518 aa).

Residue glycine 2 is the site of N-myristoyl glycine; by host attachment. The Extracellular portion of the chain corresponds to 2–17; it reads GQVIGFFQSLPNIINE. The helical transmembrane segment at 18 to 33 threads the bilayer; it reads ALNIALICVALIAILK. Residues 34–58 lie on the Cytoplasmic side of the membrane; sequence GIVNIWKSGLIQLFIFLILAGRSCS. Residue cysteine 57 participates in Zn(2+) binding. Topologically, residues 59 to 456 are extracellular; sequence HTFQIGRNHE…QGSTPLSLVD (398 aa). 4 cysteine pairs are disulfide-bonded: cysteine 87–cysteine 258, cysteine 303–cysteine 316, cysteine 325–cysteine 334, and cysteine 388–cysteine 409. Asparagine 90, asparagine 112, asparagine 127, asparagine 180, and asparagine 251 each carry an N-linked (GlcNAc...) asparagine; by host glycan. Residues asparagine 389, asparagine 397, asparagine 414, and asparagine 419 are each glycosylated (N-linked (GlcNAc...) asparagine; by host). A helical transmembrane segment spans residues 457-477; sequence LCFWSTLFYVTTLFAHLVGFP. Residues 478 to 518 are Cytoplasmic-facing; the sequence is THRHILDGPCPKPHRLTKKGICSCGHFGIPGKPVRWVKRSR. Residues histidine 479, histidine 481, cysteine 487, histidine 491, cysteine 499, and cysteine 501 each contribute to the Zn(2+) site.

The protein belongs to the arenaviridae GPC protein family. As to quaternary structure, interacts with glycoprotein G2. Part of the GP complex (GP-C) together with glycoprotein G1 and glycoprotein G2. The GP-complex interacts with protein Z, which interacts with ribonucleocapsid; these interactions may induce virion budding. Homotrimer; disulfide-linked. In pre-fusion state, G1 homotrimers bind G2 homotrimers via ionic interactions. Part of the GP complex (GP-C) together with glycoprotein G2 and the stable signal peptide. The GP-complex interacts with protein Z, which interacts with ribonucleocapsid; these interactions may induce virion budding. In terms of assembly, homotrimer. Interacts with the stable signal peptide. In pre-fusion state, G2 homotrimers bind G1 homotrimers via ionic interactions. Part of the GP complex (GP-C) together with glycoprotein G1 and the stable signal peptide. Acidification in the endosome triggers rearrangements, which ultimately leads to a 6 helix bundle formed by the two heptad repeat domains (HR1 and HR2) in post-fusion state. The GP-complex interacts with protein Z, which interacts with ribonucleocapsid; these interactions may induce virion budding. In terms of processing, specific enzymatic cleavages in vivo yield mature proteins. GP-C polyprotein is cleaved in the endoplasmic reticulum by the host protease MBTPS1. Only cleaved glycoprotein is incorporated into virions. The SSP remains stably associated with the GP complex following cleavage by signal peptidase and plays crucial roles in the trafficking of GP through the secretory pathway. Post-translationally, myristoylation is necessary for GP2-mediated fusion activity.

It is found in the virion membrane. The protein localises to the host endoplasmic reticulum membrane. Its subcellular location is the host Golgi apparatus membrane. The protein resides in the host cell membrane. Its function is as follows. Functions as a cleaved signal peptide that is retained as the third component of the GP complex (GP-C). Helps to stabilize the spike complex in its native conformation. The SSP is required for efficient glycoprotein expression, post-translational maturation cleavage of G1 and G2, glycoprotein transport to the cell surface plasma membrane, formation of infectious virus particles, and acid pH-dependent glycoprotein-mediated cell fusion. In terms of biological role, forms the virion spikes together with glycoprotein G2. The glycoprotein spike trimers are connected to the underlying matrix. Mediates virus attachment to host receptor alpha-dystroglycan DAG1. This attachment induces virion internalization predominantly through clathrin- and caveolin-independent endocytosis. Functionally, forms the virion spikes together with glycoprotein G1. The glycoprotein spike trimers are connected to the underlying matrix. Class I viral fusion protein that directs fusion of viral and host endosomal membranes, leading to delivery of the nucleocapsid into the cytoplasm. Membrane fusion is mediated by irreversible conformational changes induced by acidification. The protein is Pre-glycoprotein polyprotein GP complex of Bolomys (OLVV).